Reading from the N-terminus, the 409-residue chain is Phosphatidylserine decarboxylase proenzyme, mitochondrial (409 aa).

The transit peptide at 1 to 52 directs the protein to the mitochondrion; sequence MAASVCRPYVRSLPGVMPWRSSSCHYEYTAMHHFLGSFQKLPFEPFNTGARK. The Mitochondrial matrix segment spans residues 53 to 63; that stretch reads IHTAPVRSLFL. Residues 64–82 traverse the membrane as a helical segment; it reads LRPVPILLATGGGYAGYRQ. At 83 to 409 the chain is on the mitochondrial intermembrane side; it reads YEKYRDQKLE…IRFGEALGSL (327 aa). Catalysis depends on charge relay system; for autoendoproteolytic cleavage activity residues Asp191, His267, and Ser378. Ser378 acts as the Schiff-base intermediate with substrate; via pyruvic acid; for decarboxylase activity in catalysis. Ser378 is modified (pyruvic acid (Ser); by autocatalysis).

Belongs to the phosphatidylserine decarboxylase family. PSD-B subfamily. Eukaryotic type I sub-subfamily. As to quaternary structure, heterodimer of a large membrane-associated beta subunit and a small pyruvoyl-containing alpha subunit. Requires pyruvate as cofactor. Post-translationally, is synthesized initially as an inactive proenzyme. Formation of the active enzyme involves a self-maturation process in which the active site pyruvoyl group is generated from an internal serine residue via an autocatalytic post-translational modification. Two non-identical subunits are generated from the proenzyme in this reaction, and the pyruvate is formed at the N-terminus of the alpha chain, which is derived from the carboxyl end of the proenzyme. The autoendoproteolytic cleavage occurs by a canonical serine protease mechanism, in which the side chain hydroxyl group of the serine supplies its oxygen atom to form the C-terminus of the beta chain, while the remainder of the serine residue undergoes an oxidative deamination to produce ammonia and the pyruvoyl prosthetic group on the alpha chain. During this reaction, the Ser that is part of the protease active site of the proenzyme becomes the pyruvoyl prosthetic group, which constitutes an essential element of the active site of the mature decarboxylase.

The protein resides in the mitochondrion inner membrane. It localises to the cytoplasm. Its subcellular location is the lipid droplet. The enzyme catalyses a 1,2-diacyl-sn-glycero-3-phospho-L-serine + H(+) = a 1,2-diacyl-sn-glycero-3-phosphoethanolamine + CO2. Its pathway is phospholipid metabolism; phosphatidylethanolamine biosynthesis. Catalyzes the formation of phosphatidylethanolamine (PtdEtn) from phosphatidylserine (PtdSer). Plays a central role in phospholipid metabolism and in the interorganelle trafficking of phosphatidylserine. May be involved in lipid droplet biogenesis at the endoplasmic reticulum membrane. The polypeptide is Phosphatidylserine decarboxylase proenzyme, mitochondrial (Cricetulus griseus (Chinese hamster)).